A 303-amino-acid chain; its full sequence is Small ribosomal subunit protein uS2 (303 aa).

The disordered stretch occupies residues 267–303; that stretch reads AESLSMAEEPAPPSQRKGPASETAEPVAEPAVTESGS.

It belongs to the universal ribosomal protein uS2 family.

This Solibacter usitatus (strain Ellin6076) protein is Small ribosomal subunit protein uS2.